A 479-amino-acid chain; its full sequence is Adenosylhomocysteinase (479 aa).

3 residues coordinate substrate: T66, D142, and E203. 204 to 206 (TTT) contacts NAD(+). Substrate is bound by residues K233 and D237. NAD(+)-binding positions include N238, 267-272 (GYGDVG), E290, N325, 346-348 (IGH), and N394.

The protein belongs to the adenosylhomocysteinase family. It depends on NAD(+) as a cofactor.

The protein resides in the cytoplasm. The catalysed reaction is S-adenosyl-L-homocysteine + H2O = L-homocysteine + adenosine. The protein operates within amino-acid biosynthesis; L-homocysteine biosynthesis; L-homocysteine from S-adenosyl-L-homocysteine: step 1/1. In terms of biological role, may play a key role in the regulation of the intracellular concentration of adenosylhomocysteine. The chain is Adenosylhomocysteinase from Nitratidesulfovibrio vulgaris (strain DSM 19637 / Miyazaki F) (Desulfovibrio vulgaris).